Here is a 535-residue protein sequence, read N- to C-terminus: MMCRSLTLRFFLFIVLLQTCVRGGDVNDNLLSSCLNSHGVHNFTTLSTDTNSDYFKLLHASMQNPLFAKPTVSKPSFIVMPGSKEELSSTVHCCTRESWTIRLRSGGHSYEGLSYTADTPFVIVDMMNLNRISIDVLSETAWVESGATLGELYYAIAQSTDTLGFTAGWCPTVGSGGHISGGGFGMMSRKYGLAADNVVDAILIDSNGAILDREKMGDDVFWAIRGGGGGVWGAIYAWKIKLLPVPEKLTVFRVTKNVGIEDASSLLHKWQYVADELDEDFTVSVLGGVNGNDAWLMFLGLHLGRKDAAKTIIDEKFPELGLVDKEFQEMSWGESMAFLSGLDTISELNNRFLKFDERAFKTKVDFTKVSVPLNVFRHALEMLSEQPGGFIALNGFGGKMSEISTDFTPFPHRKGTKLMFEYIIAWNQDEESKIGEFSEWLAKFYDYLEPFVSKEPRVGYVNHIDLDIGGIDWRNKSSTTNAVEIARNWGERYFSSNYERLVKAKTLIDPNNVFNHPQSIPPMMKFEEIYMLKEL.

The first 23 residues, 1–23 (MMCRSLTLRFFLFIVLLQTCVRG), serve as a signal peptide directing secretion. Residue Asn-42 is glycosylated (N-linked (GlcNAc...) asparagine). Residues 71 to 245 (TVSKPSFIVM…YAWKIKLLPV (175 aa)) enclose the FAD-binding PCMH-type domain. A cross-link (6-(S-cysteinyl)-8alpha-(pros-histidyl)-FAD (His-Cys)) is located at residues 108 to 170 (HSYEGLSYTA…DTLGFTAGWC (63 aa)). Asn-475 carries N-linked (GlcNAc...) asparagine glycosylation.

It belongs to the oxygen-dependent FAD-linked oxidoreductase family. It depends on FAD as a cofactor. The cofactor is a metal cation. The FAD cofactor is bound via a bicovalent 6-S-cysteinyl, 8alpha-N1-histidyl FAD linkage. Expressed in roots and stems. Not detected in leaves or reproductive organs. Restricted to the parietal region of sieve elements adjacent or proximal to laticifers.

It is found in the cytoplasmic vesicle. It carries out the reaction (S)-reticuline + O2 = (S)-scoulerine + H2O2 + H(+). Its pathway is alkaloid biosynthesis; (S)-scoulerine biosynthesis; (S)-scoulerine from (S)-reticuline: step 1/1. In terms of biological role, oxygen-dependent FAD-dependent oxidoreductase essential to the formation of benzophenanthridine alkaloids in the response of plants to pathogenic attack. Catalyzes the stereospecific conversion of the N-methyl moiety of (S)-reticuline into the berberine bridge carbon of (S)-scoulerine. Involved in the biosynthesis of sanguinarine. This is Reticuline oxidase (BBE1) from Papaver somniferum (Opium poppy).